A 345-amino-acid chain; its full sequence is BAG family molecular chaperone regulator 1 (345 aa).

A disordered region spans residues 1-137 (MAQRGGARRP…STRSEEVTRE (137 aa)). Over residues 68–80 (RRPRMKKKTRRRS) the composition is skewed to basic residues. A compositionally biased stretch (basic and acidic residues) spans 81 to 91 (TRSEELTRSEE). Over residues 95 to 114 (SEEATWSEEATQSEEATQGE) the composition is skewed to low complexity. Repeat copies occupy residues 96-101 (EEATWS), 102-107 (EEATQS), 108-113 (EEATQG), 114-119 (EEMNRS), 120-125 (QEVTRD), 126-131 (EESTRS), and 132-137 (EEVTRE). A 7 X 6 AA tandem repeat of E-E-X(4) region spans residues 96-137 (EEATWSEEATQSEEATQGEEMNRSQEVTRDEESTRSEEVTRE). The segment covering 115–137 (EMNRSQEVTRDEESTRSEEVTRE) has biased composition (basic and acidic residues). The 81-residue stretch at 144–224 (LTVTVTHSNE…VMLIGKKNSP (81 aa)) folds into the Ubiquitin-like domain. The tract at residues 172 to 219 (DLAQVVEEVIGVPQSFQKLIFKGKSLKEMETPLSALGIQDGCRVMLIG) is interaction with HSPA8. Positions 216 to 345 (MLIGKKNSPQ…LQSTNFALAE (130 aa)) are interaction with PPP1R15A. Phosphoserine is present on Ser-223. The region spanning 246 to 326 (QLEELNKELT…AFLAECDTVE (81 aa)) is the BAG domain.

As to quaternary structure, homodimer. Forms a heteromeric complex with HSP70/HSC70. Binds to the ATPase domain of HSP/HSC70 chaperones. Isoform 1, isoform 3 and isoform 4 but not isoform 2 interact with HSPA8/HSC70. Interacts with NR3C1. Interacts with the N-terminal region of MAPRE2. Interacts with PPP1R15A. Interacts with BCL2 in an ATP-dependent manner. Isoform 2 does not interact with BCL2. Interacts with SIAH1. Interacts with HSPA8 (via NBD). Interacts with HSPA1A (via NBD) and HSPA1B (via NBD). Interacts with SIAH2. Interacts with ESR1; the interaction is promoted in the absence of estradiol (17-beta-estradiol/E2). In terms of processing, ubiquitinated; mediated by SIAH1 or SIAH2 and leading to its subsequent proteasomal degradation. As to expression, isoform 4 is the most abundantly expressed isoform. It is ubiquitously expressed throughout most tissues, except the liver, colon, breast and uterine myometrium. Isoform 1 is expressed in the ovary and testis. Isoform 4 is expressed in several types of tumor cell lines, and at consistently high levels in leukemia and lymphoma cell lines. Isoform 1 is expressed in the prostate, breast and leukemia cell lines. Isoform 3 is the least abundant isoform in tumor cell lines (at protein level).

Its subcellular location is the nucleus. It localises to the cytoplasm. Co-chaperone for HSP70 and HSC70 chaperone proteins. Acts as a nucleotide-exchange factor (NEF) promoting the release of ADP from the HSP70 and HSC70 proteins thereby triggering client/substrate protein release. Nucleotide release is mediated via its binding to the nucleotide-binding domain (NBD) of HSPA8/HSC70 where as the substrate release is mediated via its binding to the substrate-binding domain (SBD) of HSPA8/HSC70. Inhibits the pro-apoptotic function of PPP1R15A, and has anti-apoptotic activity. Markedly increases the anti-cell death function of BCL2 induced by various stimuli. Involved in the STUB1-mediated proteasomal degradation of ESR1 in response to age-related circulating estradiol (17-beta-estradiol/E2) decline, thereby promotes neuronal apoptosis in response to ischemic reperfusion injury. This Homo sapiens (Human) protein is BAG family molecular chaperone regulator 1 (BAG1).